The primary structure comprises 238 residues: Proenkephalin-A (238 aa).

An N-terminal signal peptide occupies residues 1–25; it reads MAASALSTCLWMLVLGTCVSLVVGT. Intrachain disulfides connect Cys27-Cys50, Cys31-Cys54, and Cys34-Cys66. The interval 76 to 103 is disordered; that stretch reads QSPLASQQDQERVDAMMADEEDATSPEH. Propeptides lie at residues 124–167, 177–195, and 206–230; these read SSAS…AEAV, ADRG…GRVL, and VGRP…SELQ.

The protein belongs to the opioid neuropeptide precursor family. In terms of tissue distribution, expressed by the venom gland. Moderately expressed in the venom gland transcriptome.

The protein localises to the secreted. Its function is as follows. Met-enkephalins compete with and mimic the effects of opiate drugs. They play a role in a number of physiologic functions, including pain perception and responses to stress. Enkephalin peptides found in Meiacanthus fangblennies induce physiological effects via their interaction with delta-type opioid receptors (OPRD1) (tested on M.grammistes). Therefore, finding a proenkephalin sequence in M.atrodorsalis venom suggests that this protein act in the same manner. The polypeptide is Proenkephalin-A (Meiacanthus atrodorsalis (Forktail blenny)).